The following is a 293-amino-acid chain: Small ribosomal subunit biogenesis GTPase RsgA (293 aa).

The 161-residue stretch at 63-223 folds into the CP-type G domain; that stretch reads KNWLVRPPIA…VADTPGFSAL (161 aa). GTP contacts are provided by residues 112–115 and 166–174; these read NKMD and GQSGVGKSS. Positions 247, 252, 254, and 260 each coordinate Zn(2+).

Belongs to the TRAFAC class YlqF/YawG GTPase family. RsgA subfamily. Monomer. Associates with 30S ribosomal subunit, binds 16S rRNA. It depends on Zn(2+) as a cofactor.

The protein resides in the cytoplasm. Its function is as follows. One of several proteins that assist in the late maturation steps of the functional core of the 30S ribosomal subunit. Helps release RbfA from mature subunits. May play a role in the assembly of ribosomal proteins into the subunit. Circularly permuted GTPase that catalyzes slow GTP hydrolysis, GTPase activity is stimulated by the 30S ribosomal subunit. The sequence is that of Small ribosomal subunit biogenesis GTPase RsgA from Geobacillus sp. (strain WCH70).